Consider the following 173-residue polypeptide: Crossover junction endodeoxyribonuclease RuvC (173 aa).

Catalysis depends on residues aspartate 8, glutamate 67, and aspartate 139. Mg(2+) contacts are provided by aspartate 8, glutamate 67, and aspartate 139.

This sequence belongs to the RuvC family. As to quaternary structure, homodimer which binds Holliday junction (HJ) DNA. The HJ becomes 2-fold symmetrical on binding to RuvC with unstacked arms; it has a different conformation from HJ DNA in complex with RuvA. In the full resolvosome a probable DNA-RuvA(4)-RuvB(12)-RuvC(2) complex forms which resolves the HJ. Requires Mg(2+) as cofactor.

It localises to the cytoplasm. The catalysed reaction is Endonucleolytic cleavage at a junction such as a reciprocal single-stranded crossover between two homologous DNA duplexes (Holliday junction).. The RuvA-RuvB-RuvC complex processes Holliday junction (HJ) DNA during genetic recombination and DNA repair. Endonuclease that resolves HJ intermediates. Cleaves cruciform DNA by making single-stranded nicks across the HJ at symmetrical positions within the homologous arms, yielding a 5'-phosphate and a 3'-hydroxyl group; requires a central core of homology in the junction. The consensus cleavage sequence is 5'-(A/T)TT(C/G)-3'. Cleavage occurs on the 3'-side of the TT dinucleotide at the point of strand exchange. HJ branch migration catalyzed by RuvA-RuvB allows RuvC to scan DNA until it finds its consensus sequence, where it cleaves and resolves the cruciform DNA. This is Crossover junction endodeoxyribonuclease RuvC from Vibrio vulnificus (strain YJ016).